Consider the following 177-residue polypeptide: Ribosome maturation factor RimM (177 aa).

Positions 104–177 (GVDGIWADLI…IIKVKLMEGM (74 aa)) constitute a PRC barrel domain.

The protein belongs to the RimM family. As to quaternary structure, binds ribosomal protein uS19.

Its subcellular location is the cytoplasm. In terms of biological role, an accessory protein needed during the final step in the assembly of 30S ribosomal subunit, possibly for assembly of the head region. Essential for efficient processing of 16S rRNA. May be needed both before and after RbfA during the maturation of 16S rRNA. It has affinity for free ribosomal 30S subunits but not for 70S ribosomes. This chain is Ribosome maturation factor RimM, found in Magnetococcus marinus (strain ATCC BAA-1437 / JCM 17883 / MC-1).